The following is a 245-amino-acid chain: tRNA (guanine-N(1)-)-methyltransferase (245 aa).

Residues Gly-114 and 133-138 (LGDFVI) each bind S-adenosyl-L-methionine.

It belongs to the RNA methyltransferase TrmD family. Homodimer.

The protein localises to the cytoplasm. It catalyses the reaction guanosine(37) in tRNA + S-adenosyl-L-methionine = N(1)-methylguanosine(37) in tRNA + S-adenosyl-L-homocysteine + H(+). Specifically methylates guanosine-37 in various tRNAs. The sequence is that of tRNA (guanine-N(1)-)-methyltransferase from Pediococcus pentosaceus (strain ATCC 25745 / CCUG 21536 / LMG 10740 / 183-1w).